Here is a 255-residue protein sequence, read N- to C-terminus: Large ribosomal subunit protein uL4 (255 aa).

It belongs to the universal ribosomal protein uL4 family. Part of the 50S ribosomal subunit.

Its function is as follows. One of the primary rRNA binding proteins, this protein initially binds near the 5'-end of the 23S rRNA. It is important during the early stages of 50S assembly. It makes multiple contacts with different domains of the 23S rRNA in the assembled 50S subunit and ribosome. Forms part of the polypeptide exit tunnel. The polypeptide is Large ribosomal subunit protein uL4 (Pyrococcus furiosus (strain ATCC 43587 / DSM 3638 / JCM 8422 / Vc1)).